Consider the following 122-residue polypeptide: Large ribosomal subunit protein uL14 (122 aa).

It belongs to the universal ribosomal protein uL14 family. In terms of assembly, part of the 50S ribosomal subunit. Forms a cluster with proteins L3 and L19. In the 70S ribosome, L14 and L19 interact and together make contacts with the 16S rRNA in bridges B5 and B8.

Binds to 23S rRNA. Forms part of two intersubunit bridges in the 70S ribosome. This chain is Large ribosomal subunit protein uL14, found in Brucella anthropi (strain ATCC 49188 / DSM 6882 / CCUG 24695 / JCM 21032 / LMG 3331 / NBRC 15819 / NCTC 12168 / Alc 37) (Ochrobactrum anthropi).